Here is a 453-residue protein sequence, read N- to C-terminus: Glutamyl-tRNA reductase (453 aa).

Residues 54-57, Ser113, 118-120, and Gln124 each bind substrate; these read TCNR and EAQ. The active-site Nucleophile is Cys55. 193-198 lines the NADP(+) pocket; sequence GGGEVS.

This sequence belongs to the glutamyl-tRNA reductase family. In terms of assembly, homodimer.

It catalyses the reaction (S)-4-amino-5-oxopentanoate + tRNA(Glu) + NADP(+) = L-glutamyl-tRNA(Glu) + NADPH + H(+). Its pathway is porphyrin-containing compound metabolism; protoporphyrin-IX biosynthesis; 5-aminolevulinate from L-glutamyl-tRNA(Glu): step 1/2. It participates in porphyrin-containing compound metabolism; chlorophyll biosynthesis. Its function is as follows. Catalyzes the NADPH-dependent reduction of glutamyl-tRNA(Glu) to glutamate 1-semialdehyde (GSA). The protein is Glutamyl-tRNA reductase of Chloroflexus aggregans (strain MD-66 / DSM 9485).